We begin with the raw amino-acid sequence, 89 residues long: Sodium channel toxin To13 (89 aa).

A signal peptide spans 1-18 (MKTLFLIITSFILLEVEG). One can recognise an LCN-type CS-alpha/beta domain in the interval 20-87 (KNGYPRDSKG…TWKNKEPKCK (68 aa)). Disulfide bonds link Cys-30–Cys-86, Cys-34–Cys-60, Cys-45–Cys-67, and Cys-49–Cys-69.

The protein belongs to the long (4 C-C) scorpion toxin superfamily. Sodium channel inhibitor family. Expressed by the venom gland.

Its subcellular location is the secreted. Its function is as follows. Inhibits voltage-gated sodium channels (Nav). This Tityus obscurus (Amazonian scorpion) protein is Sodium channel toxin To13.